A 475-amino-acid polypeptide reads, in one-letter code: Protein transport protein Sec61 subunit alpha (475 aa).

Over 1-32 the chain is Cytoplasmic; it reads MGFRFLDIVKPFTSLVPEVGQPDRKIPFREKV. A helical membrane pass occupies residues 33-53; the sequence is LWTAICLFIFLVCSQIPLYGI. Residues 54–75 lie on the Lumenal side of the membrane; sequence RSTDSSDPFYWAKVIMASNRGT. A helical transmembrane segment spans residues 76–96; it reads LMELGISPIVTSGMVMQLLAG. Over 97 to 118 the chain is Cytoplasmic; the sequence is AKLIEIDQSVKADRDLFSAAQK. The helical transmembrane segment at 119–139 threads the bilayer; the sequence is LFGMLICVGQGVAYIWSGSYG. Residues 140–145 lie on the Lumenal side of the membrane; that stretch reads DPAVLG. The helical transmembrane segment at 146–166 threads the bilayer; sequence FGNCFLIVLQLFFAGIIVMLL. The Cytoplasmic portion of the chain corresponds to 167-173; it reads DELLQKG. Residues 174–194 form a helical membrane-spanning segment; it reads YGIGSGISLFIATNICETIVW. The Lumenal portion of the chain corresponds to 195 to 241; sequence KTFSPTTVSVGKGTEFEGAVIALFHLLLTRNDKVRALKEAFYRQNLP. Residues 242–262 traverse the membrane as a helical segment; it reads NITNLLATVLIFMVVIYFQGF. Residues 263-289 lie on the Cytoplasmic side of the membrane; the sequence is RVDLPVKSTRVSGQQGTYPIKLFYTSN. The helical transmembrane segment at 290 to 310 threads the bilayer; it reads IPIILQSALVSNLYFISQLLY. Residues 311–353 lie on the Lumenal side of the membrane; that stretch reads RRFPDNILVNLFGAWRTSEYSQQMIPVSGLTYYISSPNNMSAV. The chain crosses the membrane as a helical span at residues 354–374; the sequence is LADPFHALFYITFMLTSCALF. The Cytoplasmic portion of the chain corresponds to 375 to 411; that stretch reads SKVWIEVSGSSARDVAKQLKDQQMTMKGHRDTSVIKE. Residues 412–434 form a helical membrane-spanning segment; it reads LNRYIPTAAAFGGLCIGALTVVA. The Lumenal segment spans residues 435 to 440; it reads DFMGAI. The chain crosses the membrane as a helical span at residues 441 to 461; that stretch reads GSGTGILLAVTIIYQYFETFV. Topologically, residues 462–475 are cytoplasmic; that stretch reads KEQQELSGGIGGLF.

This sequence belongs to the SecY/SEC61-alpha family. In terms of assembly, heterotrimeric complex composed of SEC61-alpha, SEC61-beta and SEC61-gamma.

The protein resides in the endoplasmic reticulum membrane. Appears to play a crucial role in the insertion of secretory and membrane polypeptides into the ER. It is required for assembly of membrane and secretory proteins. Found to be tightly associated with membrane-bound ribosomes, either directly or through adaptor proteins. In Dictyostelium discoideum (Social amoeba), this protein is Protein transport protein Sec61 subunit alpha (sec61a).